We begin with the raw amino-acid sequence, 351 residues long: Rod outer segment membrane protein 1 (351 aa).

The Cytoplasmic segment spans residues 1-19 (MAPVLPLVLPLQPRIRLAQ). Residues 20-43 (GLWLLSWLLVLVGGLTLLCSGHLL) traverse the membrane as a helical segment. Residues 44-64 (VQLWHLGTFLAPSCPFSALPQ) lie on the Lumenal side of the membrane. Residues 65–84 (VALAASAVALGTGLVGSGAS) traverse the membrane as a helical segment. Over 85-102 (RASLDAEQYPPWRGVLGP) the chain is Cytoplasmic. A helical transmembrane segment spans residues 103-125 (LLVAGTAGGGGLLVLALGLALAL). Residues 126-264 (PGTLDTGLEE…EVLLGHLQGL (139 aa)) are Lumenal-facing. A helical transmembrane segment spans residues 265–286 (ASTLGNMLAVTFLLQTLVLLGL). Residues 287–351 (RYLQTALEGL…KPPKECLPEA (65 aa)) are Cytoplasmic-facing. Residues 325–351 (QGAGPHRPAPGETPPEEKPPKECLPEA) form a disordered region. The segment covering 339–351 (PEEKPPKECLPEA) has biased composition (basic and acidic residues).

It belongs to the PRPH2/ROM1 family. As to quaternary structure, homodimer; disulfide-linked. Forms a homotetramer. Forms a heterotetramer with PRPH2. Homotetramer and heterotetramer core complexes go on to form higher order complexes by formation of intermolecular disulfide bonds. Interacts with STX3. Interacts with SNAP25. In terms of tissue distribution, retina photoreceptor (at protein level). In rim region of ROS disks (at protein level).

Its subcellular location is the photoreceptor inner segment membrane. The protein localises to the photoreceptor outer segment membrane. Plays a role in rod outer segment (ROS) morphogenesis. May play a role with PRPH2 in the maintenance of the structure of ROS curved disks. Plays a role in the organization of the ROS and maintenance of ROS disk diameter. Involved in the maintenance of the retina outer nuclear layer. The chain is Rod outer segment membrane protein 1 (ROM1) from Bos taurus (Bovine).